A 454-amino-acid polypeptide reads, in one-letter code: Glutamine synthetase (454 aa).

The GS beta-grasp domain occupies 19–111 (NNVKFIRFQF…VICDVYKDEK (93 aa)). The region spanning 118–454 (PRSRLKAILE…DWETGKYLIY (337 aa)) is the GS catalytic domain. 2 residues coordinate Mg(2+): Glu-142 and Glu-144. Glu-194 contributes to the ATP binding site. Residues Glu-199 and Glu-206 each coordinate Mg(2+). L-glutamate contacts are provided by residues 250–251 (NG) and Gly-251. His-255 provides a ligand contact to Mg(2+). ATP contacts are provided by residues 257-259 (HQS) and Ser-259. L-glutamate contacts are provided by Arg-309, Glu-315, and Arg-327. The ATP site is built by Arg-327, Arg-332, and Lys-339. Residue Glu-344 coordinates Mg(2+). Arg-346 is a binding site for L-glutamate.

This sequence belongs to the glutamine synthetase family. In terms of assembly, oligomer of 12 subunits arranged in the form of two hexagons. Requires Mg(2+) as cofactor.

Its subcellular location is the cytoplasm. It carries out the reaction L-glutamate + NH4(+) + ATP = L-glutamine + ADP + phosphate + H(+). Feedback inhibited by glycine and alanine, and inhibited by low concentrations of methionine sulfoximine. Probably involved in nitrogen metabolism via ammonium assimilation. Catalyzes the ATP-dependent biosynthesis of glutamine from glutamate and ammonia. Beta-glutamate is a much poorer substrate than alpha-glutamate. This chain is Glutamine synthetase, found in Methanocaldococcus jannaschii (strain ATCC 43067 / DSM 2661 / JAL-1 / JCM 10045 / NBRC 100440) (Methanococcus jannaschii).